Here is a 285-residue protein sequence, read N- to C-terminus: UPF0354 protein MW1686 (285 aa).

It belongs to the UPF0354 family.

The polypeptide is UPF0354 protein MW1686 (Staphylococcus aureus (strain MW2)).